Reading from the N-terminus, the 102-residue chain is Apolipoprotein A-II (102 aa).

Positions 1 to 18 (MKLLAMVALLVTICSLEG) are cleaved as a signal peptide. A Methionine sulfoxide modification is found at Met49.

The protein belongs to the apolipoprotein A2 family. In terms of assembly, monomer. Interacts with NAXE and NDRG1. As to expression, plasma.

It localises to the secreted. May stabilize HDL (high density lipoprotein) structure by its association with lipids, and affect the HDL metabolism. In Rattus norvegicus (Rat), this protein is Apolipoprotein A-II (Apoa2).